Reading from the N-terminus, the 335-residue chain is Acyl-CoA Delta(11) desaturase (335 aa).

3 helical membrane-spanning segments follow: residues 39-59, 64-84, and 98-118; these read LLTF…CFTS, TIIL…AGAH, and LQII…IHWI. The Histidine box-1 motif lies at 84 to 89; it reads HRLWAH. The Histidine box-2 motif lies at 121–125; that stretch reads HRMHH. The next 2 membrane-spanning stretches (helical) occupy residues 182 to 202 and 213 to 235; these read AIPF…MYFW and TMLR…HLYG. Residues 261–265 carry the Histidine box-3 motif; it reads HNYHH. Positions 312 to 335 are disordered; it reads MKRTGDGTDVSGQKYSCESSEVLQ. The segment covering 321–335 has biased composition (polar residues); the sequence is VSGQKYSCESSEVLQ.

Belongs to the fatty acid desaturase type 1 family. Requires Fe cation as cofactor. Detected in pheromone gland.

It is found in the membrane. It carries out the reaction an 11,12-saturated fatty acyl-CoA + 2 Fe(II)-[cytochrome b5] + O2 + 2 H(+) = an (11Z)-Delta(11)-fatty acyl-CoA + 2 Fe(III)-[cytochrome b5] + 2 H2O. Catalyzes the formation of Delta(11) fatty acyl precursors in the pheromone gland, with a preference for myristic acid. The sequence is that of Acyl-CoA Delta(11) desaturase from Choristoneura rosaceana (Oblique banded leafroller).